Consider the following 192-residue polypeptide: Ubiquitin-conjugating enzyme E2 T (192 aa).

Residues 2 to 152 (QRVSRLKREL…AKKWTEKHAL (151 aa)) form the UBC core domain. Cys-86 acts as the Glycyl thioester intermediate in catalysis. Positions 150 to 192 (HALPAPQGSDKESQEKSGSSEGTSHKRKSAEIAEESKKPCREP) are disordered. Positions 178-192 (SAEIAEESKKPCREP) are enriched in basic and acidic residues.

Belongs to the ubiquitin-conjugating enzyme family.

It is found in the nucleus. It catalyses the reaction S-ubiquitinyl-[E1 ubiquitin-activating enzyme]-L-cysteine + [E2 ubiquitin-conjugating enzyme]-L-cysteine = [E1 ubiquitin-activating enzyme]-L-cysteine + S-ubiquitinyl-[E2 ubiquitin-conjugating enzyme]-L-cysteine.. The protein operates within protein modification; protein ubiquitination. In terms of biological role, accepts ubiquitin from the E1 complex and catalyzes its covalent attachment to other proteins. Catalyzes monoubiquitination. Involved in DNA repair. In Xenopus laevis (African clawed frog), this protein is Ubiquitin-conjugating enzyme E2 T (ube2t).